Here is a 168-residue protein sequence, read N- to C-terminus: Small ribosomal subunit protein uS5 (168 aa).

In terms of domain architecture, S5 DRBM spans 13–76 (LKEQVVDIKR…EDAKKNLIHV (64 aa)).

This sequence belongs to the universal ribosomal protein uS5 family. Part of the 30S ribosomal subunit. Contacts proteins S4 and S8.

With S4 and S12 plays an important role in translational accuracy. Its function is as follows. Located at the back of the 30S subunit body where it stabilizes the conformation of the head with respect to the body. This is Small ribosomal subunit protein uS5 from Alkaliphilus oremlandii (strain OhILAs) (Clostridium oremlandii (strain OhILAs)).